We begin with the raw amino-acid sequence, 526 residues long: tRNA (guanine(26)-N(2))-dimethyltransferase (526 aa).

Polar residues predominate over residues 1 to 10 (MTENVNSSGD). Residues 1–20 (MTENVNSSGDSAIKSEDKEE) are disordered. One can recognise a Trm1 methyltransferase domain in the interval 22–441 (TVIQEGQAKV…APMHLLWDIY (420 aa)). S-adenosyl-L-methionine is bound by residues Arg-47, Arg-104, and Asp-122. 4 residues coordinate Zn(2+): Cys-286, Cys-289, Cys-325, and Cys-328. Positions 498–526 (KGKNWGPRQKAKGSVNSTKAGFQLTEHKE) are disordered.

This sequence belongs to the class I-like SAM-binding methyltransferase superfamily. Trm1 family.

It catalyses the reaction guanosine(26) in tRNA + 2 S-adenosyl-L-methionine = N(2)-dimethylguanosine(26) in tRNA + 2 S-adenosyl-L-homocysteine + 2 H(+). Dimethylates a single guanine residue at position 26 of most tRNAs using S-adenosyl-L-methionine as donor of the methyl groups. This is tRNA (guanine(26)-N(2))-dimethyltransferase (trm-1) from Caenorhabditis elegans.